A 280-amino-acid polypeptide reads, in one-letter code: Dual adapter for phosphotyrosine and 3-phosphotyrosine and 3-phosphoinositide (280 aa).

The disordered stretch occupies residues 1–20 (MGRAELLEGKMSTQDPSDLW). The SH2 domain occupies 35-129 (WYHGNLTRHA…GTLMVLKHPY (95 aa)). Tyr139 carries the post-translational modification Phosphotyrosine. Phosphoserine is present on Ser141. In terms of domain architecture, PH spans 164 to 259 (LGTKEGYLTK…WIKILRWKLS (96 aa)).

Interacts with PtdIns(3,4,5)P3 and PLCG2. In vitro, interacts with PtdIns(3,4)P2. Post-translationally, phosphorylated on tyrosine residues. In terms of tissue distribution, highly expressed in placenta and lung, followed by brain, heart, kidney, liver, pancreas and skeletal muscle. Expressed by B-lymphocytes, but not T-lymphocytes or nonhematopoietic cells.

Its subcellular location is the cytoplasm. The protein localises to the membrane. May act as a B-cell-associated adapter that regulates B-cell antigen receptor (BCR)-signaling downstream of PI3K. The protein is Dual adapter for phosphotyrosine and 3-phosphotyrosine and 3-phosphoinositide (DAPP1) of Homo sapiens (Human).